The following is a 303-amino-acid chain: Signal recognition particle receptor FtsY (303 aa).

Residues 108-115 (GVNGAGKT), 190-194 (DTAGR), and 254-257 (TKLD) contribute to the GTP site.

The protein belongs to the GTP-binding SRP family. FtsY subfamily. Part of the signal recognition particle protein translocation system, which is composed of SRP and FtsY. SRP is a ribonucleoprotein composed of Ffh and a 4.5S RNA molecule.

The protein resides in the cell inner membrane. Its subcellular location is the cytoplasm. The catalysed reaction is GTP + H2O = GDP + phosphate + H(+). In terms of biological role, involved in targeting and insertion of nascent membrane proteins into the cytoplasmic membrane. Acts as a receptor for the complex formed by the signal recognition particle (SRP) and the ribosome-nascent chain (RNC). Interaction with SRP-RNC leads to the transfer of the RNC complex to the Sec translocase for insertion into the membrane, the hydrolysis of GTP by both Ffh and FtsY, and the dissociation of the SRP-FtsY complex into the individual components. The polypeptide is Signal recognition particle receptor FtsY (Rickettsia bellii (strain RML369-C)).